A 305-amino-acid polypeptide reads, in one-letter code: 2-oxoacid:ferredoxin oxidoreductase subunit beta (305 aa).

Residues cysteine 12, cysteine 15, and cysteine 46 each coordinate [4Fe-4S] cluster. Thiamine diphosphate contacts are provided by residues 44 to 47 and histidine 65; that span reads IGCS. Aspartate 90 is a binding site for Mg(2+). 91–92 contributes to the thiamine diphosphate binding site; it reads GD. The Mg(2+) site is built by asparagine 118 and valine 120. A thiamine diphosphate-binding site is contributed by 122–123; it reads GL. Cysteine 197 is a binding site for [4Fe-4S] cluster.

In terms of assembly, heterodimer composed of an alpha and a beta subunit. It depends on [4Fe-4S] cluster as a cofactor. Thiamine diphosphate is required as a cofactor. The cofactor is Mg(2+).

It catalyses the reaction a 2-oxocarboxylate + 2 oxidized [2Fe-2S]-[ferredoxin] + CoA = an acyl-CoA + 2 reduced [2Fe-2S]-[ferredoxin] + CO2 + H(+). Functionally, catalyzes the coenzyme A-dependent oxidative decarboxylation of different 2-oxoacids such as 2-oxoglutarate, pyruvate and 2-oxobutyrate to form their CoA derivatives. This Saccharolobus solfataricus (Sulfolobus solfataricus) protein is 2-oxoacid:ferredoxin oxidoreductase subunit beta.